Here is a 239-residue protein sequence, read N- to C-terminus: LRRN4 C-terminal-like protein (239 aa).

The signal sequence occupies residues 1–19 (MLGSLSLLWLAAMTTSLVS). Over 20 to 194 (QPQILTLEDY…KFIMPPKPVT (175 aa)) the chain is Extracellular. Residues 82–179 (QPEPPRLGEV…EGPENWTGPS (98 aa)) form the Fibronectin type-III domain. N132 and N174 each carry an N-linked (GlcNAc...) asparagine glycan. Residues 195-215 (LVYAAVGVGTALALLSCAALV) form a helical membrane-spanning segment. Residues 216 to 239 (WHFCLRERWGCPRRQGMAQASEAL) lie on the Cytoplasmic side of the membrane.

The protein localises to the membrane. The protein is LRRN4 C-terminal-like protein (Lrrn4cl) of Mus musculus (Mouse).